The chain runs to 131 residues: Large ribosomal subunit protein bL17 (131 aa).

This sequence belongs to the bacterial ribosomal protein bL17 family. Part of the 50S ribosomal subunit. Contacts protein L32.

This chain is Large ribosomal subunit protein bL17, found in Cupriavidus metallidurans (strain ATCC 43123 / DSM 2839 / NBRC 102507 / CH34) (Ralstonia metallidurans).